We begin with the raw amino-acid sequence, 430 residues long: Probable aspartic-type endopeptidase TRV_06366 (430 aa).

An N-terminal signal peptide occupies residues 1-17 (MHVSTLLVAVLLPLALS). Positions 18–87 (KPTPRKKTSS…SKATAGSGKE (70 aa)) are cleaved as a propeptide — activation peptide. A disordered region spans residues 61–104 (HEMEGYHPQPISKLPGNSKATAGSGKEGVESQDEKGEVVNNPTD). Basic and acidic residues predominate over residues 87–104 (EGVESQDEKGEVVNNPTD). One can recognise a Peptidase A1 domain in the interval 109–427 (FLSPVTIGGQ…DQRGPSISLA (319 aa)). Asp125 is an active-site residue. Asn306 is a glycosylation site (N-linked (GlcNAc...) asparagine). Asp314 is a catalytic residue.

Belongs to the peptidase A1 family.

It localises to the secreted. Functionally, probable secreted aspartic-type endopeptidase which contributes to virulence. The chain is Probable aspartic-type endopeptidase TRV_06366 from Trichophyton verrucosum (strain HKI 0517).